Consider the following 498-residue polypeptide: Protein DETOXIFICATION 30 (498 aa).

The next 12 membrane-spanning stretches (helical) occupy residues 64–86 (YSLG…AAVS), 91–111 (VIAG…ETLC), 136–156 (VTAV…AFIG), 161–181 (ISSA…AYAV), 197–217 (VMAA…WFVI), 227–247 (LAVV…VYIF), 277–297 (AVML…AGYL), 302–322 (ISVA…MIAI), 349–369 (LVAV…LLIF), 393–413 (ILAV…VAVG), 419–439 (VVAY…GLLL), and 447–467 (VMGI…VLTW).

This sequence belongs to the multi antimicrobial extrusion (MATE) (TC 2.A.66.1) family.

The protein localises to the membrane. The chain is Protein DETOXIFICATION 30 from Arabidopsis thaliana (Mouse-ear cress).